Consider the following 226-residue polypeptide: Eukaryotic translation initiation factor 3 subunit K (226 aa).

Positions 42 to 200 (YNLDANLSLL…QLIVLPRNEF (159 aa)) constitute a PCI domain.

It belongs to the eIF-3 subunit K family. Component of the eukaryotic translation initiation factor 3 (eIF-3) complex.

It localises to the cytoplasm. Its function is as follows. Component of the eukaryotic translation initiation factor 3 (eIF-3) complex, which is involved in protein synthesis of a specialized repertoire of mRNAs and, together with other initiation factors, stimulates binding of mRNA and methionyl-tRNAi to the 40S ribosome. The eIF-3 complex specifically targets and initiates translation of a subset of mRNAs involved in cell proliferation. This is Eukaryotic translation initiation factor 3 subunit K (TIF3K1) from Oryza sativa subsp. japonica (Rice).